The sequence spans 311 residues: Delta-1-pyrroline-5-carboxylate reductase kk1I (311 aa).

A signal peptide spans 1 to 31 (MTKRESNTLAVLGCGMVFLVSLLDLANRLLG). The N-linked (GlcNAc...) asparagine glycan is linked to N59.

It belongs to the pyrroline-5-carboxylate reductase family.

It functions in the pathway secondary metabolite biosynthesis. In terms of biological role, delta-1-pyrroline-5-carboxylate reductase; part of the gene cluster that mediates the biosynthesis of KK-1, a novel cyclic depsipeptide with 10 residues which is a promising active compound with high activity against many plant pathogens, especially Botrytis cinerea. Within the pathway, kk1I catalyzes the synthesis of the L-pipecolic acid residue of KK-1 from delta-1-pyrroline-5-carboxylate (P5C), a metabolic intermediate of lysine. The nonribosomal peptide synthetase (NRPS) kk1B catalyzes the elongation and cyclization of the decapeptide chain composed of 1 D-lactic acid residue (D-Lac), 1 pipecolic acid residue (Pip), 1 aspartic acid residue (Asp), 1 isoleucine residue (Ile), 1 glycine residue (Gly), 1 tyrosine residue (Tyr) and 4 valine residues (Val). The Asp, Ile and 3 Val residues are N-methylated by the 5 methyltransferase domains from the NRPS (found in modules 3, 5, 6, 7 and 9), whereas the Tyr residue is O-methylated by the cluster encoded O-methyltransferase kk1A. The thioesterase kk1J is likely to be involved in the corrective mechanism of peptide chain synthesis. The D-lactate dehydrogenase kk1H is involved in the synthesis of D-lactic acid from pyruvic acid, which is recognized by the A domain of the first kk1B module. The pyrroline-5-carboxylate reductase kk1I is involved in the synthesis of the L-pipecolic acid residue of KK-1 from delta-1-pyrroline-5-carboxylate (P5C), a metabolic intermediate of lysine. It still is unclear how kk1C and kk1D are involved in the production of KK-1. In Curvularia clavata, this protein is Delta-1-pyrroline-5-carboxylate reductase kk1I.